Reading from the N-terminus, the 282-residue chain is Bis(5'-nucleosyl)-tetraphosphatase, symmetrical (282 aa).

The protein belongs to the Ap4A hydrolase family.

The catalysed reaction is P(1),P(4)-bis(5'-adenosyl) tetraphosphate + H2O = 2 ADP + 2 H(+). Hydrolyzes diadenosine 5',5'''-P1,P4-tetraphosphate to yield ADP. This Burkholderia mallei (strain NCTC 10247) protein is Bis(5'-nucleosyl)-tetraphosphatase, symmetrical.